Here is a 218-residue protein sequence, read N- to C-terminus: Glutathione S-transferase Mu 3 (218 aa).

In terms of domain architecture, GST N-terminal spans 2–88 (PMTLGYWNTR…YLGRKHNLCG (87 aa)). Glutathione is bound by residues 7–8 (YW), 46–50 (WLSEK), and 59–60 (NL). A Glycyl lysine isopeptide (Lys-Gly) (interchain with G-Cter in SUMO2) cross-link involves residue Lys50. Lys69 participates in a covalent cross-link: Glycyl lysine isopeptide (Lys-Gly) (interchain with G-Cter in SUMO2). 72-73 (QS) is a binding site for glutathione. The region spanning 90–208 (TEEERIRVDT…KSSRFLPRPV (119 aa)) is the GST C-terminal domain.

It belongs to the GST superfamily. Mu family. Homodimer.

The protein resides in the cytoplasm. The enzyme catalyses RX + glutathione = an S-substituted glutathione + a halide anion + H(+). Conjugation of reduced glutathione to a wide number of exogenous and endogenous hydrophobic electrophiles. This Mus musculus (Mouse) protein is Glutathione S-transferase Mu 3 (Gstm3).